The chain runs to 136 residues: Protein NrdI (136 aa).

This sequence belongs to the NrdI family.

Its function is as follows. Probably involved in ribonucleotide reductase function. The polypeptide is Protein NrdI (Escherichia coli (strain 55989 / EAEC)).